The primary structure comprises 72 residues: Penaeidin-2d (72 aa).

A signal peptide spans 1–21; sequence MRLVVCLVFLASFALVCQGGA. A Pyrrolidone carboxylic acid modification is found at glutamine 22. 3 disulfides stabilise this stretch: cysteine 45-cysteine 59, cysteine 48-cysteine 66, and cysteine 60-cysteine 67. Lysine 71 carries the lysine amide modification.

It belongs to the penaeidin family.

It is found in the cytoplasmic granule. Antibacterial and antifungal activity. Presents chitin-binding activity. The polypeptide is Penaeidin-2d (Penaeus setiferus (Atlantic white shrimp)).